The primary structure comprises 153 residues: Transcription antitermination protein NusB (153 aa).

The protein belongs to the NusB family.

Functionally, involved in transcription antitermination. Required for transcription of ribosomal RNA (rRNA) genes. Binds specifically to the boxA antiterminator sequence of the ribosomal RNA (rrn) operons. The sequence is that of Transcription antitermination protein NusB from Fusobacterium nucleatum subsp. nucleatum (strain ATCC 25586 / DSM 15643 / BCRC 10681 / CIP 101130 / JCM 8532 / KCTC 2640 / LMG 13131 / VPI 4355).